Here is a 635-residue protein sequence, read N- to C-terminus: S-type anion channel SLAH3 (635 aa).

The Cytoplasmic portion of the chain corresponds to 1-253 (MEEKPNYVIQ…IVLPNDKKWP (253 aa)). Over residues 102 to 121 (SDPTTSLSSENHKNSGSTGK) the composition is skewed to polar residues. The segment at 102 to 173 (SDPTTSLSSE…SGHHQNQNQA (72 aa)) is disordered. A compositionally biased stretch (basic residues) spans 153-165 (NHHHHLHRQHQSG). Residue S189 is modified to Phosphoserine. The interval 193–217 (ERQFTRKPASVEPEAPNRNNQNLNT) is disordered. The chain crosses the membrane as a helical span at residues 254-276 (FLLRYPISTFGMCLGVSSQAIMW). The Extracellular portion of the chain corresponds to 277–299 (KTLATAEPTKFLHVPLWINQGLW). The helical transmembrane segment at 300-320 (FISVALILTIATIYLLKIILF) threads the bilayer. The Cytoplasmic segment spans residues 321–335 (FEAVRREYYHPIRIN). A helical membrane pass occupies residues 336–356 (FFFAPFISLLFLALGVPPSII). Topologically, residues 357–358 (TD) are extracellular. The helical transmembrane segment at 359 to 379 (LPHFLWYLLMFPFICLELKIY) threads the bilayer. Residues 380–396 (GQWMSGGQRRLSRVANP) lie on the Cytoplasmic side of the membrane. Residues 397–417 (TNHLSVVGNFVGALLGASMGL) traverse the membrane as a helical segment. Topologically, residues 418–419 (RE) are extracellular. A helical transmembrane segment spans residues 420–440 (GPIFFYAVGMAHYLVLFVTLY). The Cytoplasmic portion of the chain corresponds to 441–455 (QRLPTNETLPKDLHP). The helical transmembrane segment at 456-476 (VFFLFVAAPSVASMAWAKVTG) threads the bilayer. Position 477 (S477) is a topological domain, extracellular. The helical transmembrane segment at 478-498 (FDYGSKVCYFIAIFLYFSLAV) threads the bilayer. The Cytoplasmic portion of the chain corresponds to 499 to 504 (RINFFR). Residues 505–525 (GIKFSLSWWAYTFPMTGAAIA) form a helical membrane-spanning segment. The Extracellular portion of the chain corresponds to 526-541 (TIRYATVVKSTMTQIM). Residues 542 to 562 (CVVLCAIATLVVFALLVTTII) traverse the membrane as a helical segment. The Cytoplasmic segment spans residues 563–635 (HAFVLRDLFP…NGKTQESDSS (73 aa)). The segment at 611 to 635 (FTDSDSSQSNDVEACNGKTQESDSS) is disordered. The span at 614-635 (SDSSQSNDVEACNGKTQESDSS) shows a compositional bias: polar residues.

It belongs to the SLAC1 S-type anion channel family. As to quaternary structure, homotrimer. Interacts with KAT1. In terms of tissue distribution, expressed in the whole plant, escpecially in vascular systems.

The protein resides in the cell membrane. Its function is as follows. Slow, weak voltage-dependent S-type anion efflux channel involved in maintenance of anion homeostasis. Binds to the highly selective inward-rectifying potassium channel KAT1 and inhibits its activity. Functions as an essential negative regulator of inward potassium channels in guard cells. Essential for the efficient stomatal closure and opening in guard cells. The protein is S-type anion channel SLAH3 (SLAH3) of Arabidopsis thaliana (Mouse-ear cress).